The following is a 362-amino-acid chain: Atypical chemokine receptor 3 (362 aa).

Residues 1-40 (MDLHLFDYAEPGNFSDISWPCNSSDCIVVDTVLCPNMPNK) are Extracellular-facing. N-linked (GlcNAc...) asparagine glycosylation is found at Asn13, Asn22, and Asn39. A helical membrane pass occupies residues 41–61 (SVLLYTLSFIYIFIFVIGMIA). The Cytoplasmic segment spans residues 62-81 (NSVVVWVNIQAKTTGYDTHC). The chain crosses the membrane as a helical span at residues 82–102 (YILNLAIADLWVVVTIPVWVV). Topologically, residues 103 to 118 (SLVQHNQWPMGELTCK) are extracellular. An intrachain disulfide couples Cys117 to Cys196. Residues 119–139 (ITHLIFSINLFGSIFFLTCMS) traverse the membrane as a helical segment. Residues 140 to 162 (VDRYLSITYFASTSSRRKKVVRR) are Cytoplasmic-facing. A helical membrane pass occupies residues 163-183 (AVCVLVWLLAFCVSLPDTYYL). Over 184 to 213 (KTVTSASNNETYCRSFYPEHSVKEWLISME) the chain is Extracellular. Residues 214–234 (LVSVVLGFAIPFCVIAVFYCL) traverse the membrane as a helical segment. At 235–252 (LARAISASSDQEKQSSRK) the chain is on the cytoplasmic side. A helical membrane pass occupies residues 253 to 273 (IIFSYVVVFLVCWLPYHVVVL). At 274 to 296 (LDIFSILHYIPFTCQLENFLFTA) the chain is on the extracellular side. A helical membrane pass occupies residues 297–319 (LHVTQCLSLVHCCVNPVLYSFIN). Over 320-362 (RNYRYELMKAFIFKYSAKTGLTKLIDASRVSETEYSALEQNAK) the chain is Cytoplasmic. Positions 324–362 (YELMKAFIFKYSAKTGLTKLIDASRVSETEYSALEQNAK) are C-terminal cytoplasmic tail. A phosphoserine mark is found at Ser347, Ser350, and Ser355.

The protein belongs to the G-protein coupled receptor 1 family. Atypical chemokine receptor subfamily. As to quaternary structure, homodimer. Can form heterodimers with CXCR4; heterodimerization may regulate CXCR4 signaling activity. Interacts with ARRB1 and ARRB2. Post-translationally, the Ser/Thr residues in the C-terminal cytoplasmic tail may be phosphorylated. Ubiquitinated at the Lys residues in its C-terminal cytoplasmic tail and is essential for correct trafficking from and to the cell membrane. Deubiquitinated by CXCL12-stimulation in a reversible manner.

It is found in the cell membrane. The protein localises to the early endosome. Its subcellular location is the recycling endosome. Atypical chemokine receptor that controls chemokine levels and localization via high-affinity chemokine binding that is uncoupled from classic ligand-driven signal transduction cascades, resulting instead in chemokine sequestration, degradation, or transcytosis. Also known as interceptor (internalizing receptor) or chemokine-scavenging receptor or chemokine decoy receptor. Acts as a receptor for chemokines CXCL11 and CXCL12/SDF1. Chemokine binding does not activate G-protein-mediated signal transduction but instead induces beta-arrestin recruitment, leading to ligand internalization and activation of MAPK signaling pathway. Required for regulation of CXCR4 protein levels in migrating interneurons, thereby adapting their chemokine responsiveness. In glioma cells, transduces signals via MEK/ERK pathway, mediating resistance to apoptosis. Promotes cell growth and survival. Not involved in cell migration, adhesion or proliferation of normal hematopoietic progenitors but activated by CXCL11 in malignant hemapoietic cells, leading to phosphorylation of ERK1/2 (MAPK3/MAPK1) and enhanced cell adhesion and migration. Plays a regulatory role in CXCR4-mediated activation of cell surface integrins by CXCL12. Required for heart valve development. Regulates axon guidance in the oculomotor system through the regulation of CXCL12 levels. The protein is Atypical chemokine receptor 3 (ACKR3) of Canis lupus familiaris (Dog).